The sequence spans 311 residues: uncharacterized protein (311 aa).

This is an uncharacterized protein from Bacillus anthracis.